A 314-amino-acid polypeptide reads, in one-letter code: tRNA pseudouridine synthase B (314 aa).

H43 provides a ligand contact to substrate. D48 (nucleophile) is an active-site residue. Residues Y76, Y179, and L200 each coordinate substrate.

The protein belongs to the pseudouridine synthase TruB family. Type 1 subfamily.

The enzyme catalyses uridine(55) in tRNA = pseudouridine(55) in tRNA. Its function is as follows. Responsible for synthesis of pseudouridine from uracil-55 in the psi GC loop of transfer RNAs. The sequence is that of tRNA pseudouridine synthase B from Salmonella typhi.